A 163-amino-acid chain; its full sequence is Globin CTT-Z (163 aa).

The signal sequence occupies residues 1-16 (MKFFAVLALCIVGAIA). The 145-residue stretch at 18-162 (PLTSDEAALV…VYTAVFQIVT (145 aa)) folds into the Globin domain. Histidine 76 and histidine 111 together coordinate heme b.

Belongs to the globin family.

The chain is Globin CTT-Z (CTT-Z) from Chironomus thummi piger (Midge).